Reading from the N-terminus, the 518-residue chain is OTU domain-containing protein 5 (518 aa).

Disordered regions lie at residues Met1 to Ala79 and Pro105 to Ala144. A compositionally biased stretch (pro residues) spans Ser39–Pro53. Positions Ser116–Ser125 are enriched in low complexity. An OTU domain is found at Phe171–Pro294. Residues Met176 to Cys182 form a cys-loop region. Residue Asp179 is part of the active site. The active-site Nucleophile is the Cys182. The tract at residues Lys231–Ile241 is variable-loop. The tract at residues Tyr282–His287 is his-loop. His287 is a catalytic residue. The disordered stretch occupies residues Ala371 to Ala450. Residues Ala377–Ser390 show a composition bias toward low complexity.

This sequence belongs to the peptidase C85 family.

The catalysed reaction is Thiol-dependent hydrolysis of ester, thioester, amide, peptide and isopeptide bonds formed by the C-terminal Gly of ubiquitin (a 76-residue protein attached to proteins as an intracellular targeting signal).. Its function is as follows. Deubiquitinating enzyme that may function as negative regulator of the innate immune system. Has peptidase activity towards 'Lys-48'- and 'Lys-63'-linked polyubiquitin chains. Can also cleave 'Lys-11'-linked ubiquitin chains (in vitro). The sequence is that of OTU domain-containing protein 5 (otud5) from Xenopus tropicalis (Western clawed frog).